The following is a 452-amino-acid chain: Tubulin alpha-8 chain (452 aa).

GTP is bound by residues Q15, E74, S143, G147, T148, T182, N209, and N231. E74 serves as a coordination point for Mg(2+). The active site involves E257.

This sequence belongs to the tubulin family. As to quaternary structure, dimer of alpha and beta chains. A typical microtubule is a hollow water-filled tube with an outer diameter of 25 nm and an inner diameter of 15 nM. Alpha-beta heterodimers associate head-to-tail to form protofilaments running lengthwise along the microtubule wall with the beta-tubulin subunit facing the microtubule plus end conferring a structural polarity. Microtubules usually have 13 protofilaments but different protofilament numbers can be found in some organisms and specialized cells. The cofactor is Mg(2+).

The protein resides in the cytoplasm. Its subcellular location is the cytoskeleton. It carries out the reaction GTP + H2O = GDP + phosphate + H(+). In terms of biological role, tubulin is the major constituent of microtubules, a cylinder consisting of laterally associated linear protofilaments composed of alpha- and beta-tubulin heterodimers. Microtubules grow by the addition of GTP-tubulin dimers to the microtubule end, where a stabilizing cap forms. Below the cap, tubulin dimers are in GDP-bound state, owing to GTPase activity of alpha-tubulin. This Caenorhabditis elegans protein is Tubulin alpha-8 chain (tba-8).